We begin with the raw amino-acid sequence, 541 residues long: Chaperonin GroEL 2 (541 aa).

ATP-binding positions include 29–32 (TLGP), 86–90 (DGTTT), G413, 476–478 (NAA), and D492.

Belongs to the chaperonin (HSP60) family. Forms a cylinder of 14 subunits composed of two heptameric rings stacked back-to-back. Interacts with the co-chaperonin GroES.

It is found in the secreted. Its subcellular location is the capsule. The protein resides in the cell surface. It localises to the cell wall. It carries out the reaction ATP + H2O + a folded polypeptide = ADP + phosphate + an unfolded polypeptide.. In terms of biological role, together with its co-chaperonin GroES, plays an essential role in assisting protein folding. The GroEL-GroES system forms a nano-cage that allows encapsulation of the non-native substrate proteins and provides a physical environment optimized to promote and accelerate protein folding. In Mycobacterium leprae (strain TN), this protein is Chaperonin GroEL 2.